The primary structure comprises 317 residues: uncharacterized protein (317 aa).

This is an uncharacterized protein from Schizosaccharomyces pombe (strain 972 / ATCC 24843) (Fission yeast).